The following is an 87-amino-acid chain: Small ribosomal subunit protein bS20 (87 aa).

Residues 1–27 (MANIKSAKKRAIQSEKRRQHNASRRSM) are disordered.

Belongs to the bacterial ribosomal protein bS20 family.

In terms of biological role, binds directly to 16S ribosomal RNA. This Aeromonas salmonicida (strain A449) protein is Small ribosomal subunit protein bS20.